A 421-amino-acid chain; its full sequence is Probable sugar-binding periplasmic protein (421 aa).

The first 27 residues, 1–27, serve as a signal peptide directing secretion; the sequence is MHKLLKLAAMGTAACALLAGMAPVANA.

This sequence belongs to the bacterial solute-binding protein 1 family.

Its subcellular location is the periplasm. Its function is as follows. Part of a binding-protein-dependent transport system for a sugar. This Brucella melitensis biotype 1 (strain ATCC 23456 / CCUG 17765 / NCTC 10094 / 16M) protein is Probable sugar-binding periplasmic protein.